We begin with the raw amino-acid sequence, 583 residues long: Probable lysosomal cobalamin transporter (583 aa).

Transmembrane regions (helical) follow at residues 8-28, 41-61, 95-115, 145-165, 188-208, 312-332, 347-367, 375-395, 418-438, and 506-526; these read LIWA…SVFI, VILT…LVPV, IVYY…IPFI, TVSF…VPVA, ALTF…VLYT, LLSG…MLLT, GYIL…VQSA, VIFT…ISAV, LLAT…TSMI, and FFGA…LLVM. Positions 541–552 are enriched in acidic residues; the sequence is LDEDAEEAEEES. A disordered region spans residues 541-562; that stretch reads LDEDAEEAEEESLLANTRGRAE.

Belongs to the LIMR family. LMBRD1 subfamily.

The protein localises to the lysosome membrane. Its function is as follows. Probable lysosomal cobalamin transporter. Required to export cobalamin from lysosomes allowing its conversion to cofactors. The sequence is that of Probable lysosomal cobalamin transporter from Aspergillus oryzae (strain ATCC 42149 / RIB 40) (Yellow koji mold).